Reading from the N-terminus, the 516-residue chain is GTPase Obg (516 aa).

One can recognise an Obg domain in the interval 4–161 (PTFVDRVTLH…LEIVLELKVV (158 aa)). An OBG-type G domain is found at 162–332 (ADIGLVGFPS…LTFAMAGIVE (171 aa)). GTP-binding positions include 168–175 (GFPSAGKS), 193–197 (FTTLV), 214–217 (DVPG), 284–287 (NKVD), and 313–315 (SAA). 2 residues coordinate Mg(2+): Ser-175 and Thr-195. The region spanning 351–432 (PSVDGSDAFT…ENAVVFDFKP (82 aa)) is the OCT domain. The span at 466-491 (AMADRAEGETRADVARRLDRPAREDG) shows a compositional bias: basic and acidic residues. A disordered region spans residues 466–516 (AMADRAEGETRADVARRLDRPAREDGGAYGPQSYEIGGRDDPDWAEEDLGE).

Belongs to the TRAFAC class OBG-HflX-like GTPase superfamily. OBG GTPase family. As to quaternary structure, monomer. Mg(2+) serves as cofactor.

The protein resides in the cytoplasm. In terms of biological role, an essential GTPase which binds GTP, GDP and possibly (p)ppGpp with moderate affinity, with high nucleotide exchange rates and a fairly low GTP hydrolysis rate. Plays a role in control of the cell cycle, stress response, ribosome biogenesis and in those bacteria that undergo differentiation, in morphogenesis control. The sequence is that of GTPase Obg from Nocardioides sp. (strain ATCC BAA-499 / JS614).